The chain runs to 1334 residues: MNRTSPDSERPPASEPVWERPWSVEEIRRSSQNWSLAADAGLLQFLQEFSQQTISRTHEIKKQVDGLIQETKATHCRLHNVFNDFLMLSNTQFIENRVYDEEVEEQVLKAEAEKAEQEKTREQKEIDLIPKVQEAVNYGLQVLDSAFEQLDIKAGNSDSEEDDANERVDLILEPKDLYIDRPLPYLIGSKLFMEQEDVGLGELSSEEGSVGSDRGSIVDSEDEKEEEESDEDFASHSDNDQNQHTTQISDEEEDDDGDLFADSEKEGDDIEDIEESAKSKRPTSFADELAARIKGDISNQRKEGQTDGKPQKTVKEKKERRTPADDEEDILFPPPTLTDEDFSPFGSRGGLFSNGQGLFDDEDESDLFKEAPRARPAQAPVSEELPPSPKPGKKIPAGAVSVLLGHPDVSGSTSAPSLKELQKHGQPTPGKSSHLPTPAGLFDDDDNDNDEDDNNFFMPSSSKPSKTDKVKSTAIIFDDDEGDLFKEKAEALPAASVSQTHESKTRADKTIALPSSKNLKLVSETKTQKGLFSDEEDSEDLFSSQSSSKPKSASLPSSQPPTSVSLFGDEDEEDSLFGSAAAKKQTSSLQPQSQEKAKPSEQPSKKTSALLFSSDEEDQWNIADSHTKLASDNKSKGELWDSGATQGQEAKAVKKTNLFEDDDDDEVDLFAIAKDSQKKTQRTSLLFEDDAESGSSLFGLPPTSVPSATTKKESVPKVPLLFSDEEDSEVPSGVKPEDLKVDNARVSPEVGSADVASIAQKEGLLPASDQEAGGPSDIFSSSSPLDKGAKGRTRTVLSLFDEDEDKVEDESSTCAPQDGREKGLKTDSRPKSTGVFQDEELLFSHKLQKDNDPDVDLFAGTKKIRSSVPSGGSLFGDDEDDDLFSSAKTQPVVPEKKGTLKKDHPVSLKNQDPLDSTQGSKEKSTWKTEPAQDSSGLTPFKSREPSSRIGKIQANLAINPAALLPTVALQIPGTKPVSSELAFPSSEPGRSHILESVPTLPGSVEAGVSFDLPAQADTLHSANKSRVKVRGKRRPQTRAARRLAAQESSEAEDVTVDRGPVAQLSSSPVLPNGHQPLLQPRMASGQTSSETATAPPWEGGPVLSAADRSFFVKSRPQTGNEADLFDSGDIFPKSRGSQSVEGAGVMAGEPPSHSSGGRKEKSLAFPDLSEGSSTEDLFQSVKPRAAKNRNPFPLLEDEEDLFADPRGKKNERKPDSHQDSVSKTHDIFEDDIFATEAIKPFPKKREKGRTLEPNLFDDNIDIFADLTVKPKEKSKKKVAAKSMFDDDTDDIFSSGLQAKASKPKSQSAEAASEQRSEHKVASIFDDPLNAFGSQ.

The interval 1–219 (MNRTSPDSER…VGSDRGSIVD (219 aa)) is sufficient for interaction with WASHC3, WASHC4 and WASHC5; required for interaction with WASHC1. Residues S157, S159, S204, S205, and S209 each carry the phosphoserine modification. The span at 201 to 213 (GELSSEEGSVGSD) shows a compositional bias: low complexity. A disordered region spans residues 201 to 471 (GELSSEEGSV…SKPSKTDKVK (271 aa)). Acidic residues-rich tracts occupy residues 219–232 (DSED…SDED) and 249–274 (SDEE…EDIE). S284 is modified (phosphoserine). Residues 289–324 (LAARIKGDISNQRKEGQTDGKPQKTVKEKKERRTPA) are compositionally biased toward basic and acidic residues. The residue at position 322 (T322) is a Phosphothreonine. The interval 347-594 (SRGGLFSNGQ…QTSSLQPQSQ (248 aa)) is sufficient for interaction with CCDC93. The interaction with VPS35 stretch occupies residues 348–1334 (RGGLFSNGQG…DDPLNAFGSQ (987 aa)). Positions 358–368 (LFDDEDESDLF) match the LFa 1 motif. S388 is modified (phosphoserine). 2 consecutive short sequence motifs (LFa) follow at residues 441–457 (LFDD…NNFF) and 476–485 (IFDDDEGDLF). The segment covering 442–454 (FDDDDNDNDEDDN) has biased composition (acidic residues). The segment at 492 to 650 (LPAASVSQTH…DSGATQGQEA (159 aa)) is disordered. Over residues 513–530 (LPSSKNLKLVSETKTQKG) the composition is skewed to polar residues. Short sequence motifs (LFa) lie at residues 531–542 (LFSDEEDSEDLF) and 566–577 (LFGDEDEEDSLF). Residues S533 and S538 each carry the phosphoserine modification. Positions 541 to 561 (LFSSQSSSKPKSASLPSSQPP) are enriched in low complexity. Polar residues-rich tracts occupy residues 584 to 594 (KQTSSLQPQSQ) and 601 to 611 (EQPSKKTSALL). 2 positions are modified to phosphoserine: S613 and S614. A compositionally biased stretch (basic and acidic residues) spans 625 to 639 (SHTKLASDNKSKGEL). 2 consecutive short sequence motifs (LFa) follow at residues 658 to 670 (LFED…VDLF) and 686 to 698 (LFED…SSLF). Positions 691 to 837 (AESGSSLFGL…SRPKSTGVFQ (147 aa)) are disordered. S723, S747, S752, S783, and S798 each carry phosphoserine. The span at 800 to 811 (FDEDEDKVEDES) shows a compositional bias: acidic residues. The span at 818 to 830 (DGREKGLKTDSRP) shows a compositional bias: basic and acidic residues. Short sequence motifs (LFa) lie at residues 835–843 (VFQDEELLF) and 852–858 (DPDVDLF). 2 disordered regions span residues 862–948 (KKIR…PSSR) and 1014–1225 (AQAD…SKTH). 2 positions are modified to phosphoserine: S870 and S873. An LFa 10 motif is present at residues 874 to 884 (LFGDDEDDDLF). Basic and acidic residues predominate over residues 894 to 906 (PEKKGTLKKDHPV). A compositionally biased stretch (polar residues) spans 908 to 919 (LKNQDPLDSTQG). The segment at 932–1334 (QDSSGLTPFK…DDPLNAFGSQ (403 aa)) is interaction with phospholipids. The span at 1023–1041 (NKSRVKVRGKRRPQTRAAR) shows a compositional bias: basic residues. The tract at residues 1024–1042 (KSRVKVRGKRRPQTRAARR) is required for interaction with F-actin-capping protein subunit alpha (CAPZA1 or CAPZA2 or CAPZA3). S1049, S1067, S1084, and S1109 each carry phosphoserine. Short sequence motifs (LFa) lie at residues 1124–1131 (LFDSGDIF), 1164–1178 (AFPD…EDLF), and 1194–1202 (LLEDEEDLF). Phosphoserine occurs at positions 1169, 1172, and 1173. Basic and acidic residues predominate over residues 1203 to 1225 (ADPRGKKNERKPDSHQDSVSKTH). 3 consecutive short sequence motifs (LFa) follow at residues 1227–1233 (IFEDDIF), 1255–1263 (LFDDNIDIF), and 1283–1292 (MFDDDTDDIF). Positions 1294–1334 (SGLQAKASKPKSQSAEAASEQRSEHKVASIFDDPLNAFGSQ) are disordered. Low complexity predominate over residues 1297 to 1311 (QAKASKPKSQSAEAA). The short motif at 1323-1331 (IFDDPLNAF) is the LFa 17 element. S1333 is modified (phosphoserine).

This sequence belongs to the FAM21 family. Component of the WASH core complex also described as WASH regulatory complex (SHRC) composed of WASHC1, WASHC2, WASHC3, WASHC4 and WASHC5; in the complex interacts (via N-terminus) directly with WASHC1. The WASH core complex associates with the F-actin-capping protein dimer (formed by CAPZA1, CAPZA2 or CAPZA3 and CAPZB) in a transient or substoichiometric manner which was initially described as WASH complex. Interacts with VPS35; mediates the association with the retromer CSC complex. Interacts with FKBP15. Interacts with CCDC93, CCDC22, VPS35L; indicative for an association of the WASH core complex with the CCC and retriever complexes. Directly interacts with TBC1D23.

The protein resides in the early endosome membrane. It is found in the cell membrane. Acts as a component of the WASH core complex that functions as a nucleation-promoting factor (NPF) at the surface of endosomes, where it recruits and activates the Arp2/3 complex to induce actin polymerization, playing a key role in the fission of tubules that serve as transport intermediates during endosome sorting. Mediates the recruitment of the WASH core complex to endosome membranes via binding to phospholipids and VPS35 of the retromer CSC. Mediates the recruitment of the F-actin-capping protein dimer to the WASH core complex probably promoting localized F-actin polymerization needed for vesicle scission. Via its C-terminus binds various phospholipids, most strongly phosphatidylinositol 4-phosphate (PtdIns-(4)P), phosphatidylinositol 5-phosphate (PtdIns-(5)P) and phosphatidylinositol 3,5-bisphosphate (PtdIns-(3,5)P2). Involved in the endosome-to-plasma membrane trafficking and recycling of SNX27-retromer-dependent cargo proteins, such as GLUT1. Required for the association of DNAJC13, ENTR1, ANKRD50 with retromer CSC subunit VPS35. Required for the endosomal recruitment of CCC and retriever complexes subunits COMMD1 and CCDC93 as well as the retrievere complex subunit VPS35L. The chain is WASH complex subunit 2 from Mus musculus (Mouse).